Here is a 361-residue protein sequence, read N- to C-terminus: MRVTVDSEQCVGAGQCVLNAPEVFDQDDDGVVVLLRADPTSGTTRRSARRATCARRPRSSSRRTEPAGCADRHRCPVRPGPRTRGPADPPPANTDRRQNHRRDSPVTTADDTAARWLRRYHPAEADAVRLVCFPHAGGSASFYHPVSARFAPGAEVVSLQYPGRQDRRKEPCVPDLGTLADLITEQLLPLDERPTVFFGHSMGAALAFETAWRLEQKGAGPRTVIASGRRGPSTTRAERVHTRDDDGIVAEMKRLNGTAAGVLGDEEILRMALPALRGDYRAIETYTCPPDRRLACGLTVLTGEDDPLTTVEEAERWRDHTTGPFRLRVFTGGHFFLTQHLDAVNTEIAQALHPDRAAPAA.

A 4Fe-4S ferredoxin-type domain is found at 2 to 29; it reads RVTVDSEQCVGAGQCVLNAPEVFDQDDD. Residues 36–110 form a disordered region; that stretch reads RADPTSGTTR…RRDSPVTTAD (75 aa). Positions 46–61 are enriched in basic residues; the sequence is RSARRATCARRPRSSS. Basic and acidic residues-rich tracts occupy residues 62 to 74 and 94 to 104; these read RRTE…DRHR and TDRRQNHRRDS. Serine 201 is an active-site residue.

It belongs to the thioesterase family.

It functions in the pathway antibiotic biosynthesis; candicidin biosynthesis. Probable thioesterase involved in the biosynthesis of candicidin. Could release the macrolide ring from the polyketide synthase. This Streptomyces griseus protein is Probable cadicidin biosynthesis thioesterase.